A 152-amino-acid chain; its full sequence is Transcriptional regulator MraZ (152 aa).

2 SpoVT-AbrB domains span residues 5-52 (ATLV…PLPE) and 81-124 (ASEC…DETT).

Belongs to the MraZ family. In terms of assembly, dodecamer.

The protein resides in the cytoplasm. The protein localises to the nucleoid. Negatively regulates its own expression and that of the subsequent genes in the proximal part of the division and cell wall (dcw) gene cluster. Acts by binding directly to DNA. May also regulate the expression of genes outside the dcw cluster. This Escherichia coli (strain K12) protein is Transcriptional regulator MraZ.